Reading from the N-terminus, the 219-residue chain is Holliday junction branch migration complex subunit RuvA (219 aa).

A domain I region spans residues 1–67; that stretch reads MIGWLRGERI…DDGSSLFGFP (67 aa). The domain II stretch occupies residues 68 to 146; it reads DRRERDLFRV…AWSAEKNSDH (79 aa). Residues 147 to 161 form a flexible linker region; sequence SDLSLVDRSDLKSLP. Residues 162–219 are domain III; the sequence is IEPDPLQDLQLTLSTLGYEDLEIRRAMRAVATGEEVPAANDGDGWLRASLRWLNRPSA.

It belongs to the RuvA family. As to quaternary structure, homotetramer. Forms an RuvA(8)-RuvB(12)-Holliday junction (HJ) complex. HJ DNA is sandwiched between 2 RuvA tetramers; dsDNA enters through RuvA and exits via RuvB. An RuvB hexamer assembles on each DNA strand where it exits the tetramer. Each RuvB hexamer is contacted by two RuvA subunits (via domain III) on 2 adjacent RuvB subunits; this complex drives branch migration. In the full resolvosome a probable DNA-RuvA(4)-RuvB(12)-RuvC(2) complex forms which resolves the HJ.

The protein localises to the cytoplasm. Functionally, the RuvA-RuvB-RuvC complex processes Holliday junction (HJ) DNA during genetic recombination and DNA repair, while the RuvA-RuvB complex plays an important role in the rescue of blocked DNA replication forks via replication fork reversal (RFR). RuvA specifically binds to HJ cruciform DNA, conferring on it an open structure. The RuvB hexamer acts as an ATP-dependent pump, pulling dsDNA into and through the RuvAB complex. HJ branch migration allows RuvC to scan DNA until it finds its consensus sequence, where it cleaves and resolves the cruciform DNA. This is Holliday junction branch migration complex subunit RuvA from Synechococcus sp. (strain CC9311).